Here is a 132-residue protein sequence, read N- to C-terminus: Transcription antitermination protein NusB (132 aa).

The protein belongs to the NusB family.

In terms of biological role, involved in transcription antitermination. Required for transcription of ribosomal RNA (rRNA) genes. Binds specifically to the boxA antiterminator sequence of the ribosomal RNA (rrn) operons. The protein is Transcription antitermination protein NusB of Campylobacter lari (strain RM2100 / D67 / ATCC BAA-1060).